The primary structure comprises 208 residues: Small ribosomal subunit protein uS5 (208 aa).

Residues 1–38 are disordered; the sequence is MPGRERRDGGRSADDNQKKNDRRGGRRDDRRNQQQDER. The S5 DRBM domain maps to 41 to 104; the sequence is YIERVVTINR…EEARKNFFRV (64 aa).

It belongs to the universal ribosomal protein uS5 family. As to quaternary structure, part of the 30S ribosomal subunit. Contacts proteins S4 and S8.

With S4 and S12 plays an important role in translational accuracy. Its function is as follows. Located at the back of the 30S subunit body where it stabilizes the conformation of the head with respect to the body. This chain is Small ribosomal subunit protein uS5, found in Corynebacterium diphtheriae (strain ATCC 700971 / NCTC 13129 / Biotype gravis).